The following is a 482-amino-acid chain: Glutamate--tRNA ligase (482 aa).

The short motif at 10 to 20 is the 'HIGH' region element; sequence PSPTGFLHIGN. Positions 253–257 match the 'KMSKS' region motif; that stretch reads KLSKR. Residue Lys256 participates in ATP binding.

This sequence belongs to the class-I aminoacyl-tRNA synthetase family. Glutamate--tRNA ligase type 1 subfamily. In terms of assembly, monomer.

The protein localises to the cytoplasm. The enzyme catalyses tRNA(Glu) + L-glutamate + ATP = L-glutamyl-tRNA(Glu) + AMP + diphosphate. Its function is as follows. Catalyzes the attachment of glutamate to tRNA(Glu) in a two-step reaction: glutamate is first activated by ATP to form Glu-AMP and then transferred to the acceptor end of tRNA(Glu). This chain is Glutamate--tRNA ligase, found in Mesoplasma florum (strain ATCC 33453 / NBRC 100688 / NCTC 11704 / L1) (Acholeplasma florum).